The sequence spans 398 residues: Probable peptidoglycan glycosyltransferase FtsW (398 aa).

Over 1 to 25 (MCYGGTAMMAFADIKEALTPKPSAQ) the chain is Cytoplasmic. A helical transmembrane segment spans residues 26–46 (LYDVPLLYCMLMLMGVGFVMV). The Periplasmic portion of the chain corresponds to 47–69 (TSASMPTADRLFGNIYHFTIRHG). A helical membrane pass occupies residues 70 to 90 (IFLALSFCLFWITTSVPMSWW). A topological domain (cytoplasmic) is located at residue lysine 91. A helical membrane pass occupies residues 92 to 112 (KANPYLLLVGLGLLLIVLIVG). Residues 113 to 120 (REVNGSTR) lie on the Periplasmic side of the membrane. Residues 121–141 (WIPIGPFNIQASELAKLFFFS) form a helical membrane-spanning segment. The Cytoplasmic portion of the chain corresponds to 142-156 (YISGYLVRKRSEVQE). The chain crosses the membrane as a helical span at residues 157–177 (NIKGFIKPILVFAAYAGLILM). At 178–179 (QP) the chain is on the periplasmic side. Residues 180–200 (DLGTVVVMFVTTVGLLFLAGA) traverse the membrane as a helical segment. Position 201 (lysine 201) is a topological domain, cytoplasmic. Residues 202 to 222 (LWQFFVLILTGVALVIGLIVL) form a helical membrane-spanning segment. Over 223–289 (EPYRMARVIG…DFIFAVIAEE (67 aa)) the chain is Periplasmic. A helical membrane pass occupies residues 290–312 (LGFVGVSSILIVLGTLVFRALLI). The Cytoplasmic segment spans residues 313–324 (GQNALKNGKEYE). Residues 325–345 (GYLALAIGIWFAFQTMVNVGA) traverse the membrane as a helical segment. Residues 346-356 (SAGILPTKGLT) lie on the Periplasmic side of the membrane. A helical membrane pass occupies residues 357-377 (LPFISYGGSSLLMMTIAAGIL). Topologically, residues 378–398 (LRVDFETKMATKQATSGGAKR) are cytoplasmic.

Belongs to the SEDS family. FtsW subfamily.

The protein localises to the cell inner membrane. It carries out the reaction [GlcNAc-(1-&gt;4)-Mur2Ac(oyl-L-Ala-gamma-D-Glu-L-Lys-D-Ala-D-Ala)](n)-di-trans,octa-cis-undecaprenyl diphosphate + beta-D-GlcNAc-(1-&gt;4)-Mur2Ac(oyl-L-Ala-gamma-D-Glu-L-Lys-D-Ala-D-Ala)-di-trans,octa-cis-undecaprenyl diphosphate = [GlcNAc-(1-&gt;4)-Mur2Ac(oyl-L-Ala-gamma-D-Glu-L-Lys-D-Ala-D-Ala)](n+1)-di-trans,octa-cis-undecaprenyl diphosphate + di-trans,octa-cis-undecaprenyl diphosphate + H(+). The protein operates within cell wall biogenesis; peptidoglycan biosynthesis. Peptidoglycan polymerase that is essential for cell division. The sequence is that of Probable peptidoglycan glycosyltransferase FtsW from Pseudoalteromonas translucida (strain TAC 125).